The chain runs to 840 residues: Translation initiation factor IF-2 (840 aa).

Positions 95–143 are enriched in basic and acidic residues; it reads RSPDEIEAERQRELEEQRAAEEAERLKAEEAAARQRAEEEARKAEEAAR. Disordered regions lie at residues 95-155 and 172-256; these read RSPD…ATAG and KPAA…PTGP. A compositionally biased stretch (low complexity) spans 144-155; the sequence is AKAAQEAAATAG. 2 stretches are compositionally biased toward basic and acidic residues: residues 175-191 and 223-232; these read AVEE…PKRD and STDEESDGYR. Basic residues predominate over residues 233 to 247; it reads RGGRGGKSKLKKRNQ. The region spanning 340–509 is the tr-type G domain; it reads TRAPVVTVMG…LLQAEVLELK (170 aa). A G1 region spans residues 349-356; the sequence is GHVDHGKT. 349–356 contacts GTP; it reads GHVDHGKT. The tract at residues 374–378 is G2; sequence GITQH. Residues 395 to 398 are G3; that stretch reads DTPG. GTP is bound by residues 395-399 and 449-452; these read DTPGH and NKID. The interval 449 to 452 is G4; it reads NKID. The tract at residues 485–487 is G5; that stretch reads SAK.

It belongs to the TRAFAC class translation factor GTPase superfamily. Classic translation factor GTPase family. IF-2 subfamily.

Its subcellular location is the cytoplasm. Its function is as follows. One of the essential components for the initiation of protein synthesis. Protects formylmethionyl-tRNA from spontaneous hydrolysis and promotes its binding to the 30S ribosomal subunits. Also involved in the hydrolysis of GTP during the formation of the 70S ribosomal complex. In Pseudomonas aeruginosa (strain LESB58), this protein is Translation initiation factor IF-2.